We begin with the raw amino-acid sequence, 208 residues long: Uracil phosphoribosyltransferase (208 aa).

Residues R78, R103, and D130–S138 each bind 5-phospho-alpha-D-ribose 1-diphosphate. Uracil contacts are provided by residues I193 and G198 to A200. D199 is a binding site for 5-phospho-alpha-D-ribose 1-diphosphate.

Belongs to the UPRTase family. The cofactor is Mg(2+).

It catalyses the reaction UMP + diphosphate = 5-phospho-alpha-D-ribose 1-diphosphate + uracil. Its pathway is pyrimidine metabolism; UMP biosynthesis via salvage pathway; UMP from uracil: step 1/1. Its activity is regulated as follows. Allosterically activated by GTP. Catalyzes the conversion of uracil and 5-phospho-alpha-D-ribose 1-diphosphate (PRPP) to UMP and diphosphate. The sequence is that of Uracil phosphoribosyltransferase from Escherichia fergusonii (strain ATCC 35469 / DSM 13698 / CCUG 18766 / IAM 14443 / JCM 21226 / LMG 7866 / NBRC 102419 / NCTC 12128 / CDC 0568-73).